A 273-amino-acid polypeptide reads, in one-letter code: Large ribosomal subunit protein uL2 (273 aa).

Disordered regions lie at residues 35–54 (DKKD…TRHI) and 222–273 (GMAM…RRNK). Residues 229–239 (DHPHGGGEGRN) are compositionally biased toward basic and acidic residues. A compositionally biased stretch (basic residues) spans 253–273 (KGFKTRKNKRTDKYIVRRRNK).

Belongs to the universal ribosomal protein uL2 family. As to quaternary structure, part of the 50S ribosomal subunit. Forms a bridge to the 30S subunit in the 70S ribosome.

One of the primary rRNA binding proteins. Required for association of the 30S and 50S subunits to form the 70S ribosome, for tRNA binding and peptide bond formation. It has been suggested to have peptidyltransferase activity; this is somewhat controversial. Makes several contacts with the 16S rRNA in the 70S ribosome. This chain is Large ribosomal subunit protein uL2, found in Aeromonas hydrophila subsp. hydrophila (strain ATCC 7966 / DSM 30187 / BCRC 13018 / CCUG 14551 / JCM 1027 / KCTC 2358 / NCIMB 9240 / NCTC 8049).